The following is a 501-amino-acid chain: Putative lon protease homolog (501 aa).

Residue 53 to 60 coordinates ATP; the sequence is GPPGIGKS. Positions 481-494 are enriched in polar residues; sequence SSSQRMSQHGYSSE. The interval 481–501 is disordered; that stretch reads SSSQRMSQHGYSSENIDRSYM.

Belongs to the peptidase S16 family.

In Methanothermobacter thermautotrophicus (strain ATCC 29096 / DSM 1053 / JCM 10044 / NBRC 100330 / Delta H) (Methanobacterium thermoautotrophicum), this protein is Putative lon protease homolog.